An 825-amino-acid chain; its full sequence is Putative pentatricopeptide repeat-containing protein At2g01510 (825 aa).

PPR repeat units lie at residues 47–77 (DTCRSNFIVEDLLRRGQVSAARKVYDEMPHK), 78–108 (NTVSTNTMISGHVKTGDVSSARDLFDAMPDR), 109–143 (TVVTWTILMGWYARNSHFDEAFKLFRQMCRSSSCT), 146–180 (DHVTFTTLLPGCNDAVPQNAVGQVHAFAVKLGFDT), 183–213 (FLTVSNVLLKSYCEVRRLDLACVLFEEIPEK), 214–248 (DSVTFNTLITGYEKDGLYTESIHLFLKMRQSGHQP), 249–283 (SDFTFSGVLKAVVGLHDFALGQQLHALSVTTGFSR), 284–314 (DASVGNQILDFYSKHDRVLETRMLFDEMPEL), 315–349 (DFVSYNVVISSYSQADQYEASLHFFREMQCMGFDR), 350–384 (RNFPFATMLSIAANLSSLQMGRQLHCQALLATADS), 385–415 (ILHVGNSLVDMYAKCEMFEEAELIFKSLPQR), 416–450 (TTVSWTALISGYVQKGLHGAGLKLFTKMRGSNLRA), 451–485 (DQSTFATVLKASASFASLLLGKQLHAFIIRSGNLE), 486–516 (NVFSGSGLVDMYAKCGSIKDAVQVFEEMPDR), 517–551 (NAVSWNALISAHADNGDGEAAIGAFAKMIESGLQP), 552–587 (DSVSILGVLTACSHCGFVEQGTEYFQAMSPIYGITP), and 588–618 (KKKHYACMLDLLGRNGRFAEAEKLMDEMPFE). Positions 623-699 (MWSSVLNACR…VPAYSWVEVN (77 aa)) are type E motif. The type E(+) motif stretch occupies residues 700 to 730 (HKIHVFSSNDQTHPNGDEIVRKINELTAEIE). The type DYW motif stretch occupies residues 731 to 825 (REGYKPDTSS…EGVCSCGDYW (95 aa)).

It belongs to the PPR family. PCMP-H subfamily.

The protein is Putative pentatricopeptide repeat-containing protein At2g01510 (PCMP-H36) of Arabidopsis thaliana (Mouse-ear cress).